The sequence spans 28 residues: Conotoxin Cl5.3 (28 aa).

The protein belongs to the conotoxin T superfamily. Contains 2 disulfide bonds that can be either 'C1-C3, C2-C4' or 'C1-C4, C2-C3', since these disulfide connectivities have been observed for conotoxins with cysteine framework V (for examples, see AC P0DQQ7 and AC P81755). As to expression, expressed by the venom duct.

It localises to the secreted. This chain is Conotoxin Cl5.3, found in Californiconus californicus (California cone).